A 512-amino-acid polypeptide reads, in one-letter code: Probable cobyric acid synthase (512 aa).

A GATase cobBQ-type domain is found at 275–460 (SVTVAVPHLP…LHGLFGNDAA (186 aa)). The Nucleophile role is filled by Cys353. The active site involves His452.

The protein belongs to the CobB/CobQ family. CobQ subfamily.

The protein operates within cofactor biosynthesis; adenosylcobalamin biosynthesis. Functionally, catalyzes amidations at positions B, D, E, and G on adenosylcobyrinic A,C-diamide. NH(2) groups are provided by glutamine, and one molecule of ATP is hydrogenolyzed for each amidation. The sequence is that of Probable cobyric acid synthase from Halobacterium salinarum (strain ATCC 29341 / DSM 671 / R1).